A 149-amino-acid chain; its full sequence is Arginine repressor (149 aa).

Belongs to the ArgR family.

The protein localises to the cytoplasm. It functions in the pathway amino-acid biosynthesis; L-arginine biosynthesis [regulation]. Its function is as follows. Regulates arginine biosynthesis genes. In Alkaliphilus metalliredigens (strain QYMF), this protein is Arginine repressor.